The following is an 803-amino-acid chain: Volume-regulated anion channel subunit LRRC8C (803 aa).

Residues 1–22 are Cytoplasmic-facing; sequence MIPVTEFRQFSEQQPAFRVLKP. Residues 23 to 43 traverse the membrane as a helical segment; that stretch reads WWDVFTDYLSVAMLMIGVFGC. Residues 44–125 lie on the Extracellular side of the membrane; that stretch reads TLQVMQDKII…YERALHWYAK (82 aa). 2 disulfides stabilise this stretch: C54/C308 and C115/C293. N-linked (GlcNAc...) asparagine glycosylation is found at N64 and N70. The chain crosses the membrane as a helical span at residues 126–146; sequence YFPYLVLIHTLVFMLCSNFWF. The Cytoplasmic portion of the chain corresponds to 147–266; it reads KFPGSSSKIE…ILYAMYVRQT (120 aa). A disordered region spans residues 177–211; it reads EVSGEDSEEKDNRKNNMNRSNTIQSGPEGSLVKSQ. A compositionally biased stretch (polar residues) spans 191 to 211; the sequence is NNMNRSNTIQSGPEGSLVKSQ. 2 positions are modified to phosphoserine: S212 and S215. A helical transmembrane segment spans residues 267-287; sequence VLKVIKFLIIIAYNSALVSKV. Topologically, residues 288–320 are extracellular; it reads QFTVDCNVDIQDMTGYKNFSCNHTMAHLFSKLS. Residues 321–341 traverse the membrane as a helical segment; that stretch reads FCYLCFVSIYGLTCLYTLYWL. The Cytoplasmic segment spans residues 342–803; the sequence is FYRSLREYSF…SDVREQMKAD (462 aa). LRR repeat units follow at residues 397–420, 421–443, 446–466, 467–488, 490–513, 515–537, 541–563, 565–587, 588–611, 613–635, 637–659, 660–682, 684–705, 706–728, 730–751, 752–774, and 776–799; these read ENKLKQLNLNNEWTPDKLRQKLQT, NAHNRLELPLIMLSGLPDTVFEI, LQSLKLEIIKNVMIPATIAQL, DNLQELSLHQCSVKIHSAALSF, KENLKVLSVKFDDMRELPPWMYGL, NLEELYLVGSLSHDISKNVTLES, LKSLKILSIKSNVSKIPQAVVDV, SHLQKMCIHNDGTKLVMLNNLKK, MTNLTELELVHCDLERIPHAVFSL, SLQELDLKENNLKSIEEIVSFQH, RKLTVLKLWYNSIAYIPEHIKKL, TSLERLFFSHNKVEVLPSHLFLC, KIRYLDLSYNDIRFIPPEIGVL, QSLQYFSITCNKVESLPDELYFC, KLKTLKIGKNSLSVLSPKIGNL, LFLSYLDIKGNHFEVLPPELGDC, and ALKRAGLVVEDALFETLPSDVREQ.

It belongs to the LRRC8 family. As to quaternary structure, heterohexamer; oligomerizes with other LRRC8 proteins (LRRC8A, LRRC8B, LRRC8D and/or LRRC8E) to form a heterohexamer. Homoheptamer; inactive, likely because it is not targeted to the plasma membrane in the absence of LRRC8A. In vivo, the subunit composition may depend primarily on expression levels, and heterooligomeric channels containing various proportions of the different LRRC8 proteins may coexist.

The protein localises to the cell membrane. Its subcellular location is the endoplasmic reticulum membrane. The catalysed reaction is chloride(in) = chloride(out). It carries out the reaction iodide(out) = iodide(in). The enzyme catalyses taurine(out) = taurine(in). It catalyses the reaction 2',3'-cGAMP(out) = 2',3'-cGAMP(in). Non-essential component of the volume-regulated anion channel (VRAC, also named VSOAC channel), an anion channel required to maintain a constant cell volume in response to extracellular or intracellular osmotic changes. The VRAC channel conducts iodide better than chloride and can also conduct organic osmolytes like taurine. Plays a redundant role in the efflux of amino acids, such as aspartate and glutamate, in response to osmotic stress. The VRAC channel also mediates transport of immunoreactive cyclic dinucleotide GMP-AMP (2'-3'-cGAMP), an immune messenger produced in response to DNA virus in the cytosol. Channel activity requires LRRC8A plus at least one other family member (LRRC8B, LRRC8C, LRRC8D or LRRC8E); channel characteristics depend on the precise subunit composition. The protein is Volume-regulated anion channel subunit LRRC8C of Rattus norvegicus (Rat).